Here is a 148-residue protein sequence, read N- to C-terminus: Large ribosomal subunit protein bL9 (148 aa).

This sequence belongs to the bacterial ribosomal protein bL9 family.

Functionally, binds to the 23S rRNA. The sequence is that of Large ribosomal subunit protein bL9 from Clostridium perfringens (strain ATCC 13124 / DSM 756 / JCM 1290 / NCIMB 6125 / NCTC 8237 / Type A).